The sequence spans 202 residues: Small ribosomal subunit protein uS4c (202 aa).

Residues 90–158 (MRSDNVIFRL…ISKNIELYQK (69 aa)) enclose the S4 RNA-binding domain.

This sequence belongs to the universal ribosomal protein uS4 family. As to quaternary structure, part of the 30S ribosomal subunit. Contacts protein S5. The interaction surface between S4 and S5 is involved in control of translational fidelity.

Its subcellular location is the plastid. It is found in the chloroplast. One of the primary rRNA binding proteins, it binds directly to 16S rRNA where it nucleates assembly of the body of the 30S subunit. In terms of biological role, with S5 and S12 plays an important role in translational accuracy. This Exsertotheca crispa (Moss) protein is Small ribosomal subunit protein uS4c (rps4).